A 275-amino-acid polypeptide reads, in one-letter code: Caspase-3 (275 aa).

M1 is subject to N-acetylmethionine. 2 consecutive propeptides follow at residues 1 to 9 (MENTENSVD) and 10 to 28 (SKSI…KSMD). Residue K11 is modified to N6-acetyllysine. S26 carries the phosphoserine modification. Residues H121 and C163 contribute to the active site. S-nitrosocysteine; in inhibited form is present on C163.

The protein belongs to the peptidase C14A family. As to quaternary structure, heterotetramer that consists of two anti-parallel arranged heterodimers, each one formed by a 17 kDa (p17) and a 12 kDa (p12) subunit. Interacts with BIRC6/bruce. Cleavage by granzyme B, caspase-6, caspase-8 and caspase-10 generates the two active subunits. Additional processing of the propeptides is likely due to the autocatalytic activity of the activated protease. Active heterodimers between the small subunit of caspase-7 protease and the large subunit of caspase-3 also occur and vice versa. Post-translationally, S-nitrosylated on its catalytic site cysteine in unstimulated cell lines and denitrosylated upon activation of the Fas apoptotic pathway, associated with an increase in intracellular caspase activity. Fas therefore activates caspase-3 not only by inducing the cleavage of the caspase zymogen to its active subunits, but also by stimulating the denitrosylation of its active site thiol. In terms of processing, ubiquitinated by BIRC6; this activity is inhibited by DIABLO/SMAC.

The protein localises to the cytoplasm. The enzyme catalyses Strict requirement for an Asp residue at positions P1 and P4. It has a preferred cleavage sequence of Asp-Xaa-Xaa-Asp-|- with a hydrophobic amino-acid residue at P2 and a hydrophilic amino-acid residue at P3, although Val or Ala are also accepted at this position.. Its activity is regulated as follows. Inhibited by BIRC6; following inhibition of BIRC6-caspase binding by DIABLO/SMAC, BIRC6 is subjected to caspase cleavage, leading to an increase in active caspases. Functionally, involved in the activation cascade of caspases responsible for apoptosis execution. At the onset of apoptosis, it proteolytically cleaves poly(ADP-ribose) polymerase PARP1 at a '216-Asp-|-Gly-217' bond. Cleaves and activates sterol regulatory element binding proteins (SREBPs) between the basic helix-loop-helix leucine zipper domain and the membrane attachment domain. Cleaves and activates caspase-6, -7 and -9 (CASP6, CASP7 and CASP9, respectively). Cleaves and inactivates interleukin-18 (IL18). Triggers cell adhesion in sympathetic neurons through RET cleavage. Cleaves IL-1 beta between an Asp and an Ala, releasing the mature cytokine which is involved in a variety of inflammatory processes. Cleaves and inhibits serine/threonine-protein kinase AKT1 in response to oxidative stress. Acts as an inhibitor of type I interferon production during virus-induced apoptosis by mediating cleavage of antiviral proteins CGAS, IRF3 and MAVS, thereby preventing cytokine overproduction. Also involved in pyroptosis by mediating cleavage and activation of gasdermin-E (GSDME). Cleaves XRCC4 and phospholipid scramblase proteins XKR4, XKR8 and XKR9, leading to promote phosphatidylserine exposure on apoptotic cell surface. Cleaves BIRC6 following inhibition of BIRC6-caspase binding by DIABLO/SMAC. The sequence is that of Caspase-3 (CASP3) from Bos taurus (Bovine).